We begin with the raw amino-acid sequence, 108 residues long: Virulence-associated protein I (108 aa).

The HTH cro/C1-type domain occupies 19 to 74 (LREEYLKPMGLSAHALAKALHVSPSRINEIVREQRGITADTALRLVRYFGGDAQSW). Positions 30–49 (SAHALAKALHVSPSRINEIV) form a DNA-binding region, H-T-H motif.

Belongs to the VapA/VapI family.

In Dichelobacter nodosus (Bacteroides nodosus), this protein is Virulence-associated protein I (vapI).